Reading from the N-terminus, the 326-residue chain is N-acetyl-gamma-glutamyl-phosphate reductase (326 aa).

Cysteine 155 is a catalytic residue.

It belongs to the NAGSA dehydrogenase family. Type 1 subfamily.

The protein localises to the cytoplasm. The enzyme catalyses N-acetyl-L-glutamate 5-semialdehyde + phosphate + NADP(+) = N-acetyl-L-glutamyl 5-phosphate + NADPH + H(+). Its pathway is amino-acid biosynthesis; L-arginine biosynthesis; N(2)-acetyl-L-ornithine from L-glutamate: step 3/4. Functionally, catalyzes the NADPH-dependent reduction of N-acetyl-5-glutamyl phosphate to yield N-acetyl-L-glutamate 5-semialdehyde. This is N-acetyl-gamma-glutamyl-phosphate reductase from Shewanella frigidimarina (strain NCIMB 400).